The chain runs to 264 residues: Carbonic anhydrase 7 (264 aa).

Residues 5-262 (HCWGYGQDDG…LKGRVVKASF (258 aa)) enclose the Alpha-carbonic anhydrase domain. The active-site Proton donor/acceptor is the H66. Residues H96, H98, and H121 each coordinate Zn(2+). 201–202 (TT) lines the substrate pocket.

The protein belongs to the alpha-carbonic anhydrase family. Zn(2+) is required as a cofactor.

The protein resides in the cytoplasm. It catalyses the reaction hydrogencarbonate + H(+) = CO2 + H2O. In terms of biological role, reversible hydration of carbon dioxide. This is Carbonic anhydrase 7 (Ca7) from Mus musculus (Mouse).